The following is a 685-amino-acid chain: DEAD-box ATP-dependent RNA helicase 7 (685 aa).

The tract at residues 1 to 89 (MPSISMMSDA…SELVQADDLK (89 aa)) is disordered. 2 stretches are compositionally biased toward basic and acidic residues: residues 22 to 42 (MKSE…SSSK) and 66 to 78 (AVDL…KSDN). The Q motif signature appears at 107 to 135 (NSLSNFRISKPLKDVLISKGIKALFPIQA). A Helicase ATP-binding domain is found at 138–320 (FDNVIDGCDL…TRFLKSAKKT (183 aa)). 151–158 (ARTGQGKT) contacts ATP. The short motif at 266 to 269 (DEAD) is the DEAD box element. In terms of domain architecture, Helicase C-terminal spans 349 to 491 (DLIPDIIRCY…LSAPQPVDVA (143 aa)).

Belongs to the DEAD box helicase family. DDX21/DDX50 subfamily.

The protein resides in the nucleus. The catalysed reaction is ATP + H2O = ADP + phosphate + H(+). In Spinacia oleracea (Spinach), this protein is DEAD-box ATP-dependent RNA helicase 7 (RH7).